We begin with the raw amino-acid sequence, 479 residues long: Glycogen synthase (479 aa).

Residue Lys-15 coordinates ADP-alpha-D-glucose.

Belongs to the glycosyltransferase 1 family. Bacterial/plant glycogen synthase subfamily.

The catalysed reaction is [(1-&gt;4)-alpha-D-glucosyl](n) + ADP-alpha-D-glucose = [(1-&gt;4)-alpha-D-glucosyl](n+1) + ADP + H(+). The protein operates within glycan biosynthesis; glycogen biosynthesis. In terms of biological role, synthesizes alpha-1,4-glucan chains using ADP-glucose. This Clostridium novyi (strain NT) protein is Glycogen synthase.